The following is a 348-amino-acid chain: Histidinol-phosphate aminotransferase (348 aa).

Lys-207 carries the N6-(pyridoxal phosphate)lysine modification.

It belongs to the class-II pyridoxal-phosphate-dependent aminotransferase family. Histidinol-phosphate aminotransferase subfamily. In terms of assembly, homodimer. Requires pyridoxal 5'-phosphate as cofactor.

The catalysed reaction is L-histidinol phosphate + 2-oxoglutarate = 3-(imidazol-4-yl)-2-oxopropyl phosphate + L-glutamate. The protein operates within amino-acid biosynthesis; L-histidine biosynthesis; L-histidine from 5-phospho-alpha-D-ribose 1-diphosphate: step 7/9. This Rippkaea orientalis (strain PCC 8801 / RF-1) (Cyanothece sp. (strain PCC 8801)) protein is Histidinol-phosphate aminotransferase.